Reading from the N-terminus, the 352-residue chain is Selenide, water dikinase (352 aa).

C23 is a catalytic residue. ATP contacts are provided by residues K26 and 54 to 56; that span reads SRD. D57 contacts Mg(2+). ATP is bound by residues D74, D97, and 145 to 147; that span reads GHS. A Mg(2+)-binding site is contributed by D97. D233 is a binding site for Mg(2+).

This sequence belongs to the selenophosphate synthase 1 family. Class I subfamily. As to quaternary structure, homodimer. Mg(2+) is required as a cofactor.

It carries out the reaction hydrogenselenide + ATP + H2O = selenophosphate + AMP + phosphate + 2 H(+). Synthesizes selenophosphate from selenide and ATP. The chain is Selenide, water dikinase from Shewanella baltica (strain OS223).